A 261-amino-acid polypeptide reads, in one-letter code: Imidazole glycerol phosphate synthase subunit HisF (261 aa).

Catalysis depends on residues aspartate 11 and aspartate 130.

Belongs to the HisA/HisF family. In terms of assembly, heterodimer of HisH and HisF.

The protein localises to the cytoplasm. The catalysed reaction is 5-[(5-phospho-1-deoxy-D-ribulos-1-ylimino)methylamino]-1-(5-phospho-beta-D-ribosyl)imidazole-4-carboxamide + L-glutamine = D-erythro-1-(imidazol-4-yl)glycerol 3-phosphate + 5-amino-1-(5-phospho-beta-D-ribosyl)imidazole-4-carboxamide + L-glutamate + H(+). The protein operates within amino-acid biosynthesis; L-histidine biosynthesis; L-histidine from 5-phospho-alpha-D-ribose 1-diphosphate: step 5/9. Functionally, IGPS catalyzes the conversion of PRFAR and glutamine to IGP, AICAR and glutamate. The HisF subunit catalyzes the cyclization activity that produces IGP and AICAR from PRFAR using the ammonia provided by the HisH subunit. This Heliobacterium modesticaldum (strain ATCC 51547 / Ice1) protein is Imidazole glycerol phosphate synthase subunit HisF.